The sequence spans 209 residues: Endoplasmic reticulum vesicle protein 25 (209 aa).

The signal sequence occupies residues Met-1–Ala-18. The Lumenal portion of the chain corresponds to Leu-19–Arg-178. In terms of domain architecture, GOLD spans Pro-31–Ser-119. Residues Asn-179 to Leu-199 form a helical membrane-spanning segment. Over Lys-200 to Ile-209 the chain is Cytoplasmic.

The protein belongs to the EMP24/GP25L family.

Its subcellular location is the endoplasmic reticulum membrane. It is found in the golgi apparatus membrane. Functionally, constituent of COPII-coated endoplasmic reticulum-derived transport vesicles. Required for efficient transport of a subset of secretory proteins to the Golgi. Facilitates retrograde transport from the Golgi to the endoplasmic reticulum. This Eremothecium gossypii (strain ATCC 10895 / CBS 109.51 / FGSC 9923 / NRRL Y-1056) (Yeast) protein is Endoplasmic reticulum vesicle protein 25 (ERV25).